We begin with the raw amino-acid sequence, 255 residues long: Imidazole glycerol phosphate synthase subunit HisF (255 aa).

Active-site residues include aspartate 12 and aspartate 131.

This sequence belongs to the HisA/HisF family. In terms of assembly, heterodimer of HisH and HisF.

The protein localises to the cytoplasm. It carries out the reaction 5-[(5-phospho-1-deoxy-D-ribulos-1-ylimino)methylamino]-1-(5-phospho-beta-D-ribosyl)imidazole-4-carboxamide + L-glutamine = D-erythro-1-(imidazol-4-yl)glycerol 3-phosphate + 5-amino-1-(5-phospho-beta-D-ribosyl)imidazole-4-carboxamide + L-glutamate + H(+). Its pathway is amino-acid biosynthesis; L-histidine biosynthesis; L-histidine from 5-phospho-alpha-D-ribose 1-diphosphate: step 5/9. IGPS catalyzes the conversion of PRFAR and glutamine to IGP, AICAR and glutamate. The HisF subunit catalyzes the cyclization activity that produces IGP and AICAR from PRFAR using the ammonia provided by the HisH subunit. This Ignicoccus hospitalis (strain KIN4/I / DSM 18386 / JCM 14125) protein is Imidazole glycerol phosphate synthase subunit HisF.